The following is a 156-amino-acid chain: Ribosomal RNA large subunit methyltransferase H (156 aa).

S-adenosyl-L-methionine-binding positions include L73, G104, and 123-128 (LSPLTL).

Belongs to the RNA methyltransferase RlmH family. In terms of assembly, homodimer.

Its subcellular location is the cytoplasm. It catalyses the reaction pseudouridine(1915) in 23S rRNA + S-adenosyl-L-methionine = N(3)-methylpseudouridine(1915) in 23S rRNA + S-adenosyl-L-homocysteine + H(+). In terms of biological role, specifically methylates the pseudouridine at position 1915 (m3Psi1915) in 23S rRNA. The chain is Ribosomal RNA large subunit methyltransferase H from Photorhabdus laumondii subsp. laumondii (strain DSM 15139 / CIP 105565 / TT01) (Photorhabdus luminescens subsp. laumondii).